The primary structure comprises 94 residues: Small ribosomal subunit protein uS19 (94 aa).

The protein belongs to the universal ribosomal protein uS19 family.

Functionally, protein S19 forms a complex with S13 that binds strongly to the 16S ribosomal RNA. This is Small ribosomal subunit protein uS19 from Wolbachia pipientis subsp. Culex pipiens (strain wPip).